The sequence spans 344 residues: Phosphate acyltransferase (344 aa).

It belongs to the PlsX family. In terms of assembly, homodimer. Probably interacts with PlsY.

It is found in the cytoplasm. The catalysed reaction is a fatty acyl-[ACP] + phosphate = an acyl phosphate + holo-[ACP]. It functions in the pathway lipid metabolism; phospholipid metabolism. Its function is as follows. Catalyzes the reversible formation of acyl-phosphate (acyl-PO(4)) from acyl-[acyl-carrier-protein] (acyl-ACP). This enzyme utilizes acyl-ACP as fatty acyl donor, but not acyl-CoA. This is Phosphate acyltransferase from Paracidovorax citrulli (strain AAC00-1) (Acidovorax citrulli).